The following is a 526-amino-acid chain: MVAYRLLALISLGLGSHCASALQYGYNQLSTHKDSAVVAGAFPAINGTHLQSPAFTSPGTVPRGFSDGTSGPTRDETMEGFMRRLARSNSWMAYHEADFKSEEGRKFPYMYLSASNSSVENPSSHKLRVWLQGGVHGNEPAGDQSMLALLGDLAANQKWAAKLLEKMDILVLPRYNPDGVFYFQRYLATNFDPNRDHVKLARQQTRDIKELFTRFSPHIATDMHEFTAGRTFGPKKDIIYAADALFSAAKNLNIDEGIRQLSEKLFAKRMGKDIEAAGLRWDPYITQGESSSSKLLLLEAGTDAKIGRNAMGLSQCVVFLCETRGIGIADQHFERRTLSGLVMAKSILQTAVDNFDEVYNTIERGIRRFTNSRNDIVLTDKSPIMERTFGMLNITDASLFDYPIDFATTTPAEAVLTRSRPRAYLIPPSWPDIVKRLEVFGVKADKLPYSYVGPVEALNVTSVTFDKEYYEGVVTTTVQTKLVERNIRLPAGSYLVKTNQKNAALAFVALEVRTKDLLPVLIMDVY.

The N-terminal stretch at 1–21 (MVAYRLLALISLGLGSHCASA) is a signal peptide. N-linked (GlcNAc...) asparagine glycosylation occurs at N46. The interval 53–76 (PAFTSPGTVPRGFSDGTSGPTRDE) is disordered. One can recognise a Peptidase M14 domain in the interval 71 to 351 (GPTRDETMEG…VMAKSILQTA (281 aa)). N-linked (GlcNAc...) asparagine glycosylation is present at N116. Residues H136, E139, and H224 each coordinate Zn(2+). E322 acts as the Proton donor/acceptor in catalysis. 2 N-linked (GlcNAc...) asparagine glycosylation sites follow: N393 and N459.

The protein belongs to the peptidase M14 family. Requires Zn(2+) as cofactor.

It localises to the secreted. Functionally, extracellular metalloprotease that contributes to pathogenicity. The polypeptide is Probable carboxypeptidase 2 (MCPB) (Arthroderma benhamiae (strain ATCC MYA-4681 / CBS 112371) (Trichophyton mentagrophytes)).